A 342-amino-acid polypeptide reads, in one-letter code: GTPase Obg (342 aa).

The Obg domain occupies 1–159 (MKFLDLCKVY…RTIWLRLKLI (159 aa)). An OBG-type G domain is found at 160 to 327 (ADAGLLGLPN…VLRALWAEID (168 aa)). Residues 166–173 (GLPNAGKS), 191–195 (FTTLV), 212–215 (DIPG), 279–282 (NKID), and 308–310 (SGV) each bind GTP. Residues serine 173 and threonine 193 each contribute to the Mg(2+) site.

Belongs to the TRAFAC class OBG-HflX-like GTPase superfamily. OBG GTPase family. Monomer. Mg(2+) is required as a cofactor.

The protein localises to the cytoplasm. An essential GTPase which binds GTP, GDP and possibly (p)ppGpp with moderate affinity, with high nucleotide exchange rates and a fairly low GTP hydrolysis rate. Plays a role in control of the cell cycle, stress response, ribosome biogenesis and in those bacteria that undergo differentiation, in morphogenesis control. The chain is GTPase Obg from Cereibacter sphaeroides (strain KD131 / KCTC 12085) (Rhodobacter sphaeroides).